Here is a 200-residue protein sequence, read N- to C-terminus: 3-isopropylmalate dehydratase small subunit (200 aa).

It belongs to the LeuD family. LeuD type 1 subfamily. As to quaternary structure, heterodimer of LeuC and LeuD.

The enzyme catalyses (2R,3S)-3-isopropylmalate = (2S)-2-isopropylmalate. It participates in amino-acid biosynthesis; L-leucine biosynthesis; L-leucine from 3-methyl-2-oxobutanoate: step 2/4. In terms of biological role, catalyzes the isomerization between 2-isopropylmalate and 3-isopropylmalate, via the formation of 2-isopropylmaleate. The protein is 3-isopropylmalate dehydratase small subunit of Aliivibrio fischeri (strain MJ11) (Vibrio fischeri).